Reading from the N-terminus, the 793-residue chain is Outer membrane protein assembly factor BamA (793 aa).

The N-terminal stretch at 1-19 (MKKLLIASLLFGTTTTVFA) is a signal peptide. POTRA domains are found at residues 22-89 (FVAK…VVAK), 90-170 (SIIS…INED), 173-259 (AKLA…VNEG), 262-341 (YDLR…VDAG), and 344-418 (LTVR…VKER).

It belongs to the BamA family. Part of the Bam complex.

It is found in the cell outer membrane. Functionally, part of the outer membrane protein assembly complex, which is involved in assembly and insertion of beta-barrel proteins into the outer membrane. This is Outer membrane protein assembly factor BamA from Haemophilus influenzae.